Consider the following 103-residue polypeptide: c-Myc-binding protein (103 aa).

It belongs to the AMY1 family. As to quaternary structure, binds via its C-terminal region to the N-terminal region of MYC. Associates with AKAP1/S-AKAP84. Interacts with MYCBPAP. Interacts with CFAP91. As to expression, highly expressed in heart, placenta, pancreas, skeletal muscle and kidney. Also present at low levels in lung.

The protein resides in the cytoplasm. It is found in the nucleus. The protein localises to the mitochondrion. In terms of biological role, may control the transcriptional activity of MYC. Stimulates the activation of E box-dependent transcription by MYC. The polypeptide is c-Myc-binding protein (Homo sapiens (Human)).